A 1210-amino-acid chain; its full sequence is Epidermal growth factor receptor (1210 aa).

A signal peptide spans 1-24; it reads MRPSGTAGAALLALLAALCPASRA. Residues 25–645 lie on the Extracellular side of the membrane; that stretch reads LEEKKVCQGT…CARNGPKIPS (621 aa). A disulfide bridge links cysteine 31 with cysteine 58. One copy of the Approximate repeat lies at 75-300; the sequence is DLSFLKTIQE…CVKKCPRNYV (226 aa). N-linked (GlcNAc...) asparagine glycosylation is found at asparagine 128, asparagine 175, and asparagine 196. 13 cysteine pairs are disulfide-bonded: cysteine 157–cysteine 187, cysteine 190–cysteine 199, cysteine 194–cysteine 207, cysteine 215–cysteine 223, cysteine 219–cysteine 231, cysteine 232–cysteine 240, cysteine 236–cysteine 248, cysteine 251–cysteine 260, cysteine 264–cysteine 291, cysteine 295–cysteine 307, cysteine 311–cysteine 326, cysteine 329–cysteine 333, and cysteine 337–cysteine 362. Serine 229 is subject to Phosphoserine. Asparagine 352, asparagine 361, asparagine 413, and asparagine 444 each carry an N-linked (GlcNAc...) asparagine glycan. Residues 390-600 form an Approximate repeat; that stretch reads QELDILKTVK…CVKTCPAGVM (211 aa). 11 cysteine pairs are disulfide-bonded: cysteine 470/cysteine 499, cysteine 506/cysteine 515, cysteine 510/cysteine 523, cysteine 526/cysteine 535, cysteine 539/cysteine 555, cysteine 558/cysteine 571, cysteine 562/cysteine 579, cysteine 582/cysteine 591, cysteine 595/cysteine 617, cysteine 620/cysteine 628, and cysteine 624/cysteine 636. N-linked (GlcNAc...) asparagine glycosylation is present at asparagine 528. A glycan (N-linked (GlcNAc...) asparagine) is linked at asparagine 568. N-linked (GlcNAc...) asparagine glycosylation occurs at asparagine 603. The chain crosses the membrane as a helical span at residues 646-668; that stretch reads IATGMVGALLLLLVVALGIGLFM. At 669 to 1210 the chain is on the cytoplasmic side; sequence RRRHIVRKRT…APQSSEFIGA (542 aa). At threonine 678 the chain carries Phosphothreonine; by PKC and PKD/PRKD1. The important for dimerization, phosphorylation and activation stretch occupies residues 688–704; sequence LVEPLTPSGEAPNQALL. At threonine 693 the chain carries Phosphothreonine; by PKD/PRKD1. Serine 695 is subject to Phosphoserine. Residues 712–979 enclose the Protein kinase domain; sequence FKKIKVLGSG…KMARDPQRYL (268 aa). Lysine 716 is covalently cross-linked (Glycyl lysine isopeptide (Lys-Gly) (interchain with G-Cter in ubiquitin)). 718–726 contacts ATP; it reads LGSGAFGTV. Lysine 737 participates in a covalent cross-link: Glycyl lysine isopeptide (Lys-Gly) (interchain with G-Cter in ubiquitin). Lysine 745 contributes to the ATP binding site. Lysine 745 carries the post-translational modification N6-(2-hydroxyisobutyryl)lysine. Residues lysine 754 and lysine 757 each participate in a glycyl lysine isopeptide (Lys-Gly) (interchain with G-Cter in ubiquitin) cross-link. Residue 790–791 coordinates ATP; the sequence is TQ. The Proton acceptor role is filled by aspartate 837. Aspartate 855 lines the ATP pocket. Lysine 867 participates in a covalent cross-link: Glycyl lysine isopeptide (Lys-Gly) (interchain with G-Cter in ubiquitin). Tyrosine 869 is modified (phosphotyrosine). Residues lysine 929, lysine 960, and lysine 970 each participate in a glycyl lysine isopeptide (Lys-Gly) (interchain with G-Cter in ubiquitin) cross-link. Phosphoserine occurs at positions 991 and 995. Residues tyrosine 998 and tyrosine 1016 each carry the phosphotyrosine; by autocatalysis modification. A phosphoserine mark is found at serine 1026 and serine 1039. Threonine 1041 carries the post-translational modification Phosphothreonine. A Phosphoserine modification is found at serine 1042. Cysteine 1049 carries S-palmitoyl cysteine lipidation. Serine 1064 carries the post-translational modification Phosphoserine. The residue at position 1069 (tyrosine 1069) is a Phosphotyrosine. Residues serine 1070, serine 1071, and serine 1081 each carry the phosphoserine modification. Tyrosine 1092 and tyrosine 1110 each carry phosphotyrosine; by autocatalysis. The segment at 1097-1137 is disordered; sequence VPKRPAGSVQNPVYHNQPLNPAPSRDPHYQDPHSTAVGNPE. 2 stretches are compositionally biased toward polar residues: residues 1104-1115 and 1128-1137; these read SVQNPVYHNQPL and PHSTAVGNPE. Cysteine 1146 carries S-palmitoyl cysteine lipidation. Position 1166 is a phosphoserine (serine 1166). 2 positions are modified to phosphotyrosine; by autocatalysis: tyrosine 1172 and tyrosine 1197. At arginine 1199 the chain carries Omega-N-methylarginine.

Belongs to the protein kinase superfamily. Tyr protein kinase family. EGF receptor subfamily. Binding of the ligand triggers homo- and/or heterodimerization of the receptor triggering its autophosphorylation. Heterodimer with ERBB2. Forms a complex with CCDC88A/GIV (via SH2-like regions) and GNAI3 which leads to enhanced EGFR signaling and triggering of cell migration; binding to CCDC88A requires autophosphorylation of the EGFR C-terminal region, and ligand stimulation is required for recruitment of GNAI3 to the complex. Interacts with ERRFI1; inhibits dimerization of the kinase domain and autophosphorylation. Part of a complex with ERBB2 and either PIK3C2A or PIK3C2B. Interacts with GRB2; an adapter protein coupling the receptor to downstream signaling pathways. Interacts with GAB2; involved in signaling downstream of EGFR. Interacts with STAT3; mediates EGFR downstream signaling in cell proliferation. Interacts with RIPK1; involved in NF-kappa-B activation. Interacts (autophosphorylated) with CBL, CBLB and CBLC; involved in EGFR ubiquitination and regulation; interaction with CBL is reduced in the presence of tensin TNS4. Interacts with SOCS5; regulates EGFR degradation through ELOC- and ELOB-mediated ubiquitination and proteasomal degradation. Interacts with PRMT5; methylates EGFR and enhances interaction with PTPN6. Interacts (phosphorylated) with PTPN6; inhibits EGFR-dependent activation of MAPK/ERK. Interacts with COPG1; essential for regulation of EGF-dependent nuclear transport of EGFR by retrograde trafficking from the Golgi to the ER. Interacts with TNK2; this interaction is dependent on EGF stimulation and kinase activity of EGFR. Interacts with PCNA; positively regulates PCNA. Interacts with PELP1. Interacts with MUC1. Interacts with AP2M1. Interacts with FER. May interact with EPS8; mediates EPS8 phosphorylation. Interacts (via SH2 domains) with GRB2, NCK1 and NCK2. Interacts with ATXN2. Interacts with GAREM1. Interacts (ubiquitinated) with ANKRD13A/B/D; the interaction is direct and may regulate EGFR internalization after EGF stimulation. Interacts with GPER1; the interaction occurs in an estrogen-dependent manner. Interacts (via C-terminal cytoplasmic kinase domain) with ZPR1 (via zinc fingers). Interacts with RNF115 and RNF126. Interacts with GPRC5A (via its transmembrane domain). Interacts with FAM83B; positively regulates EGFR inducing its autophosphorylation in absence of stimulation by EGF. Interacts with LAPTM4B; positively correlates with EGFR activation. Interacts with STX19. Interacts with CD44. Interacts with PGRMC1; the interaction requires PGRMC1 homodimerization. Interacts with PIKFYVE. Interacts with NEU3. Interacts with TRAF4. Interacts with the ant venom OMEGA-myrmeciitoxin(02)-Mg1a. Interacts with CD82; this interaction facilitates ligand-induced endocytosis of the receptor and its subsequent desensitization. Phosphorylated on Tyr residues in response to EGF. Phosphorylation at Ser-695 is partial and occurs only if Thr-693 is phosphorylated. Phosphorylation at Thr-678 and Thr-693 by PRKD1 inhibits EGF-induced MAPK8/JNK1 activation. Dephosphorylation by PTPRJ prevents endocytosis and stabilizes the receptor at the plasma membrane. Autophosphorylation at Tyr-1197 is stimulated by methylation at Arg-1199 and enhances interaction with PTPN6. Autophosphorylation at Tyr-1092 and/or Tyr-1110 recruits STAT3. Dephosphorylated by PTPN1 and PTPN2. In terms of processing, monoubiquitinated and polyubiquitinated upon EGF stimulation; which does not affect tyrosine kinase activity or signaling capacity but may play a role in lysosomal targeting. Polyubiquitin linkage is mainly through 'Lys-63', but linkage through 'Lys-48', 'Lys-11' and 'Lys-29' also occurs. Deubiquitination by OTUD7B prevents degradation. Ubiquitinated by RNF115 and RNF126. Ubiquitinated by ZNRF1 or CBL at different lysines in response to EGF stimulation; leading to recruitment of the ESCRT machinery and subsequent degradation in the lysosomes. Deubiquitinated by UCHL1 leading to the inhibition of its degradation. Post-translationally, palmitoylated on Cys residues by ZDHHC20. Palmitoylation inhibits internalization after ligand binding, and increases the persistence of tyrosine-phosphorylated EGFR at the cell membrane. Palmitoylation increases the amplitude and duration of EGFR signaling. Methylated. Methylation at Arg-1199 by PRMT5 stimulates phosphorylation at Tyr-1197. Hypothalamus.

It localises to the cell membrane. The protein localises to the endoplasmic reticulum membrane. Its subcellular location is the golgi apparatus membrane. The protein resides in the nucleus membrane. It is found in the endosome. It localises to the endosome membrane. The protein localises to the nucleus. It carries out the reaction L-tyrosyl-[protein] + ATP = O-phospho-L-tyrosyl-[protein] + ADP + H(+). Endocytosis and inhibition of the activated EGFR by phosphatases like PTPRJ and PTPRK constitute immediate regulatory mechanisms. Upon EGF-binding phosphorylates EPS15 that regulates EGFR endocytosis and activity. Moreover, inducible feedback inhibitors including LRIG1, SOCS4, SOCS5 and ERRFI1 constitute alternative regulatory mechanisms for the EGFR signaling. Receptor tyrosine kinase binding ligands of the EGF family and activating several signaling cascades to convert extracellular cues into appropriate cellular responses. Known ligands include EGF, TGFA/TGF-alpha, AREG, epigen/EPGN, BTC/betacellulin, epiregulin/EREG and HBEGF/heparin-binding EGF. Ligand binding triggers receptor homo- and/or heterodimerization and autophosphorylation on key cytoplasmic residues. The phosphorylated receptor recruits adapter proteins like GRB2 which in turn activates complex downstream signaling cascades. Activates at least 4 major downstream signaling cascades including the RAS-RAF-MEK-ERK, PI3 kinase-AKT, PLCgamma-PKC and STATs modules. May also activate the NF-kappa-B signaling cascade. Also directly phosphorylates other proteins like RGS16, activating its GTPase activity and probably coupling the EGF receptor signaling to the G protein-coupled receptor signaling. Also phosphorylates MUC1 and increases its interaction with SRC and CTNNB1/beta-catenin. Positively regulates cell migration via interaction with CCDC88A/GIV which retains EGFR at the cell membrane following ligand stimulation, promoting EGFR signaling which triggers cell migration. Plays a role in enhancing learning and memory performance. Plays a role in mammalian pain signaling (long-lasting hypersensitivity). In Macaca mulatta (Rhesus macaque), this protein is Epidermal growth factor receptor (EGFR).